The sequence spans 70 residues: U2-agatoxin-Ao1d (70 aa).

Residues 1-20 form the signal peptide; sequence MRAIIYLLLISAMVFSMTKA. Residues 21–34 constitute a propeptide that is removed on maturation; it reads VPEEEGLQLSEDER. 3 disulfides stabilise this stretch: Cys37–Cys53, Cys44–Cys58, and Cys52–Cys68. Position 69 is a leucine amide (Leu69).

It belongs to the neurotoxin 01 (U2-agtx) family. In terms of tissue distribution, expressed by the venom gland.

The protein resides in the secreted. In terms of biological role, insect active toxin causing rapid but reversible paralysis in crickets. No activity shown in mammals. Does not show effect on mammalian voltage-gated calcium channels. The polypeptide is U2-agatoxin-Ao1d (Agelena orientalis (Funnel-web spider)).